Consider the following 274-residue polypeptide: 2,3,4,5-tetrahydropyridine-2,6-dicarboxylate N-succinyltransferase (274 aa).

Belongs to the transferase hexapeptide repeat family.

It localises to the cytoplasm. The catalysed reaction is (S)-2,3,4,5-tetrahydrodipicolinate + succinyl-CoA + H2O = (S)-2-succinylamino-6-oxoheptanedioate + CoA. Its pathway is amino-acid biosynthesis; L-lysine biosynthesis via DAP pathway; LL-2,6-diaminopimelate from (S)-tetrahydrodipicolinate (succinylase route): step 1/3. The chain is 2,3,4,5-tetrahydropyridine-2,6-dicarboxylate N-succinyltransferase from Yersinia pseudotuberculosis serotype IB (strain PB1/+).